The primary structure comprises 68 residues: Protein RH1 (68 aa).

The chain is Protein RH1 from Pantherophis guttatus (Corn snake).